Here is a 485-residue protein sequence, read N- to C-terminus: Glutamate--tRNA ligase (485 aa).

The short motif at 12-22 is the 'HIGH' region element; sequence PSPTGYMHIGN. Residues 253–257 carry the 'KMSKS' region motif; that stretch reads KLSKR. Lys256 lines the ATP pocket.

Belongs to the class-I aminoacyl-tRNA synthetase family. Glutamate--tRNA ligase type 1 subfamily. Monomer.

It is found in the cytoplasm. The catalysed reaction is tRNA(Glu) + L-glutamate + ATP = L-glutamyl-tRNA(Glu) + AMP + diphosphate. In terms of biological role, catalyzes the attachment of glutamate to tRNA(Glu) in a two-step reaction: glutamate is first activated by ATP to form Glu-AMP and then transferred to the acceptor end of tRNA(Glu). This chain is Glutamate--tRNA ligase, found in Clostridium acetobutylicum (strain ATCC 824 / DSM 792 / JCM 1419 / IAM 19013 / LMG 5710 / NBRC 13948 / NRRL B-527 / VKM B-1787 / 2291 / W).